The following is a 260-amino-acid chain: MNPPNRTGHRFFVFSGKLAGLLYSLCCYLFFLLTALYLIGFLAGIGVPKDINSGPGITWPLAVLVDAILITLFAAQHSGMARKNFKRWWMRFIPATLERATYVLSSCLVLALLFVLWQPIATPVWNVESPWGKGLLIALFWLGWGIVLLATFLISHFELFGVKQTLDAWRKRIPEKPAFKSPWLYKLVRHPLYVGFLIAFWATPDMTAGHLLFAILSTSYILIGAHLEEKDLVDSLGEVYQSYQQEVGMLVPKRNQTKGR.

Transmembrane regions (helical) follow at residues 27-47 (CYLF…GIGV), 55-75 (PGIT…LFAA), 107-127 (CLVL…VWNV), 134-154 (GLLI…TFLI), and 196-216 (FLIA…FAIL).

This sequence belongs to the nurim family.

The protein localises to the membrane. The enzyme catalyses methanethiol + S-adenosyl-L-methionine = dimethyl sulfide + S-adenosyl-L-homocysteine + H(+). Functionally, catalyzes the methylation of methanethiol (MeSH) to yield dimethylsulphide (DMS). The sequence is that of Methanethiol S-methyltransferase from Pseudomonas sp. (strain GM41(2012)).